The chain runs to 312 residues: Acetaldehyde dehydrogenase (312 aa).

12–15 serves as a coordination point for NAD(+); the sequence is SGNI. C132 functions as the Acyl-thioester intermediate in the catalytic mechanism. NAD(+)-binding positions include 163-171 and N290; that span reads SAGPGTRAN.

This sequence belongs to the acetaldehyde dehydrogenase family. Heterotetramer composed of two DmpG (aldolase) and two DmpF (dehydrogenase) subunits, which allows a direct channeling of acetaldehyde between the two active sites.

The enzyme catalyses acetaldehyde + NAD(+) + CoA = acetyl-CoA + NADH + H(+). It functions in the pathway aromatic compound metabolism; phenol degradation. Its activity is regulated as follows. Is not activated by Mn(2+), Mg(2+), Ca(2+), Zn(2+) or Co(2+). In terms of biological role, catalyzes the conversion of acetaldehyde to acetyl-CoA, using NAD(+) and coenzyme A. Can also act on propanal and butanal to form propanoyl-CoA and butanoyl-CoA, respectively. Is the final enzyme in the meta-cleavage pathway for the degradation of aromatic compounds such as phenols, cresols and catechols. NADP(+) can replace NAD(+) but the rate of reaction is much slower. The protein is Acetaldehyde dehydrogenase (dmpF) of Pseudomonas sp. (strain CF600).